A 91-amino-acid chain; its full sequence is Protein RacC (91 aa).

The chain is Protein RacC (racC) from Escherichia coli (strain K12).